The sequence spans 304 residues: E3 ubiquitin-protein ligase BOI (304 aa).

Residues L178 to L214 form a WRD domain region. A coiled-coil region spans residues Q197 to F220. The segment at C254 to D291 adopts an RING-type zinc-finger fold.

In terms of assembly, interacts with MYB108/BOS1 and the DELLA proteins GAI, RGA, RGL1, RGL2 and RGL3. In terms of tissue distribution, expressed in leaves, siliques, roots, flowering tissues and stigma tips.

Its subcellular location is the nucleus. The catalysed reaction is S-ubiquitinyl-[E2 ubiquitin-conjugating enzyme]-L-cysteine + [acceptor protein]-L-lysine = [E2 ubiquitin-conjugating enzyme]-L-cysteine + N(6)-ubiquitinyl-[acceptor protein]-L-lysine.. It functions in the pathway protein degradation; proteasomal ubiquitin-dependent pathway. Its function is as follows. E3 ubiquitin-protein ligase involved in the regulation of pathogen and abiotic stress responses by facilitating degradation of MYB108/BOI. Attenuates cell death by preventing caspase activation. Has no effect on the stability of the DELLA proteins. Not regulated by MYB108/BOI. The polypeptide is E3 ubiquitin-protein ligase BOI (BOI) (Arabidopsis thaliana (Mouse-ear cress)).